The primary structure comprises 230 residues: Ribose-5-phosphate isomerase A (230 aa).

Residues 31 to 34 (TGST), 88 to 91 (DGSD), and 101 to 104 (KGGG) each bind substrate. The active-site Proton acceptor is the Glu-110. Lys-128 serves as a coordination point for substrate.

It belongs to the ribose 5-phosphate isomerase family. Homodimer.

The enzyme catalyses aldehydo-D-ribose 5-phosphate = D-ribulose 5-phosphate. Its pathway is carbohydrate degradation; pentose phosphate pathway; D-ribose 5-phosphate from D-ribulose 5-phosphate (non-oxidative stage): step 1/1. In terms of biological role, catalyzes the reversible conversion of ribose-5-phosphate to ribulose 5-phosphate. The polypeptide is Ribose-5-phosphate isomerase A (Lactobacillus acidophilus (strain ATCC 700396 / NCK56 / N2 / NCFM)).